Reading from the N-terminus, the 71-residue chain is uncharacterized protein (71 aa).

The chain crosses the membrane as a helical span at residues 5 to 22 (VVMCSGLFCSVFAGAFML).

It is found in the membrane. This is an uncharacterized protein from Bacillus subtilis (strain 168).